Consider the following 498-residue polypeptide: ATP synthase subunit beta, chloroplastic (498 aa).

172–179 (GGAGVGKT) serves as a coordination point for ATP.

Belongs to the ATPase alpha/beta chains family. As to quaternary structure, F-type ATPases have 2 components, CF(1) - the catalytic core - and CF(0) - the membrane proton channel. CF(1) has five subunits: alpha(3), beta(3), gamma(1), delta(1), epsilon(1). CF(0) has four main subunits: a(1), b(1), b'(1) and c(9-12).

It is found in the plastid. It localises to the chloroplast thylakoid membrane. It carries out the reaction ATP + H2O + 4 H(+)(in) = ADP + phosphate + 5 H(+)(out). Produces ATP from ADP in the presence of a proton gradient across the membrane. The catalytic sites are hosted primarily by the beta subunits. This is ATP synthase subunit beta, chloroplastic from Coffea arabica (Arabian coffee).